We begin with the raw amino-acid sequence, 215 residues long: MANERHYSATDRLLLQADAALRTLLPFSGKPYRPSPAQGEPETQLDAGKARHVAGLMRINHTGEVCAQALYQGQALTARLPRVRGAMEQAANEEIDHLAWCEQRIRELNSRPSLLNPLFYGLSFGIGATAGLISDRISLGFVAATEDQVCKHLDDHLKQLPEEDRKSRAILEQMRIDEQQHATTALEAGGLRFPAPVKFGMTLLSKVMTKSTYRI.

The Fe cation site is built by Glu-64, Glu-94, His-97, Glu-146, Glu-178, and His-181.

Belongs to the COQ7 family. Requires Fe cation as cofactor.

It localises to the cell membrane. The catalysed reaction is a 5-methoxy-2-methyl-3-(all-trans-polyprenyl)benzene-1,4-diol + AH2 + O2 = a 3-demethylubiquinol + A + H2O. Its pathway is cofactor biosynthesis; ubiquinone biosynthesis. Catalyzes the hydroxylation of 2-nonaprenyl-3-methyl-6-methoxy-1,4-benzoquinol during ubiquinone biosynthesis. In Azotobacter vinelandii (strain DJ / ATCC BAA-1303), this protein is 3-demethoxyubiquinol 3-hydroxylase.